The following is a 465-amino-acid chain: Siroheme synthase (465 aa).

The segment at 1 to 203 (MDFLPLFHSL…GRPAEAERLL (203 aa)) is precorrin-2 dehydrogenase /sirohydrochlorin ferrochelatase. NAD(+) is bound by residues 22 to 23 (EV) and 43 to 44 (PQ). At serine 128 the chain carries Phosphoserine. Residues 217-465 (GEVYLVGAGP…AWFEGAREDA (249 aa)) form a uroporphyrinogen-III C-methyltransferase region. Residue proline 226 coordinates S-adenosyl-L-methionine. Aspartate 249 functions as the Proton acceptor in the catalytic mechanism. Lysine 271 functions as the Proton donor in the catalytic mechanism. S-adenosyl-L-methionine-binding positions include 302 to 304 (GGD), isoleucine 307, 332 to 333 (TA), methionine 384, and glycine 413.

This sequence in the N-terminal section; belongs to the precorrin-2 dehydrogenase / sirohydrochlorin ferrochelatase family. In the C-terminal section; belongs to the precorrin methyltransferase family.

The catalysed reaction is uroporphyrinogen III + 2 S-adenosyl-L-methionine = precorrin-2 + 2 S-adenosyl-L-homocysteine + H(+). It carries out the reaction precorrin-2 + NAD(+) = sirohydrochlorin + NADH + 2 H(+). It catalyses the reaction siroheme + 2 H(+) = sirohydrochlorin + Fe(2+). Its pathway is cofactor biosynthesis; adenosylcobalamin biosynthesis; precorrin-2 from uroporphyrinogen III: step 1/1. The protein operates within cofactor biosynthesis; adenosylcobalamin biosynthesis; sirohydrochlorin from precorrin-2: step 1/1. It participates in porphyrin-containing compound metabolism; siroheme biosynthesis; precorrin-2 from uroporphyrinogen III: step 1/1. It functions in the pathway porphyrin-containing compound metabolism; siroheme biosynthesis; siroheme from sirohydrochlorin: step 1/1. Its pathway is porphyrin-containing compound metabolism; siroheme biosynthesis; sirohydrochlorin from precorrin-2: step 1/1. Functionally, multifunctional enzyme that catalyzes the SAM-dependent methylations of uroporphyrinogen III at position C-2 and C-7 to form precorrin-2 via precorrin-1. Then it catalyzes the NAD-dependent ring dehydrogenation of precorrin-2 to yield sirohydrochlorin. Finally, it catalyzes the ferrochelation of sirohydrochlorin to yield siroheme. This is Siroheme synthase from Pseudomonas aeruginosa (strain LESB58).